We begin with the raw amino-acid sequence, 815 residues long: Putative transcription factor phnE (815 aa).

Residues 522–577 (PSRRNSDGSAHSSPSSTPSSSSTSSPLPSPASERPPPLDVVTRPSTGTSTPSSPTL) form a disordered region. Low complexity predominate over residues 523-547 (SRRNSDGSAHSSPSSTPSSSSTSSP). Over residues 548 to 559 (LPSPASERPPPL) the composition is skewed to pro residues. Over residues 563-577 (TRPSTGTSTPSSPTL) the composition is skewed to low complexity.

Its subcellular location is the nucleus. Putative transcription factor that may be involved in the regulation of the expression of the gene cluster that mediates the biosynthesis of phenalenones such as herqueinone, compounds that have been reported to treat tumors, bacterial infections and/or mycoses, and rheumatic diseases. The chain is Putative transcription factor phnE from Penicillium herquei.